The following is a 922-amino-acid chain: Probable dipeptidyl-aminopeptidase B (922 aa).

Basic and acidic residues predominate over residues 1–16 (MATEKGHSRDDEERVP). The segment at 1 to 21 (MATEKGHSRDDEERVPLTRGS) is disordered. Residues 1–99 (MATEKGHSRD…KPMHKSVKIA (99 aa)) lie on the Cytoplasmic side of the membrane. The chain crosses the membrane as a helical; Signal-anchor for type II membrane protein span at residues 100 to 120 (LWSLLFLSLGGWSLAFVLFIF). Over 121 to 922 (RSHDTYQTPI…AGLYKFKHLC (802 aa)) the chain is Vacuolar. N-linked (GlcNAc...) asparagine glycans are attached at residues asparagine 135, asparagine 200, asparagine 351, and asparagine 574. The active-site Charge relay system is serine 756. The N-linked (GlcNAc...) asparagine glycan is linked to asparagine 815. Active-site charge relay system residues include aspartate 833 and histidine 866. An N-linked (GlcNAc...) asparagine glycan is attached at asparagine 902.

Belongs to the peptidase S9B family.

The protein resides in the vacuole membrane. The catalysed reaction is Release of an N-terminal dipeptide, Xaa-Yaa-|-Zaa-, from a polypeptide, preferentially when Yaa is Pro, provided Zaa is neither Pro nor hydroxyproline.. Functionally, type IV dipeptidyl-peptidase which removes N-terminal dipeptides sequentially from polypeptides having unsubstituted N-termini provided that the penultimate residue is proline. This Ajellomyces capsulatus (strain NAm1 / WU24) (Darling's disease fungus) protein is Probable dipeptidyl-aminopeptidase B (DAPB).